A 329-amino-acid chain; its full sequence is MSKILFFSPCSLFSHTMNKNSRLHTNSNIGNTFFSEIGIGITGNSFLLLYHILKFIRGHRPRLTDLPIGLLSLIHLLMLLVAAFIATDIFISRRGWDDIICKFLVYLYRVLRGLSLCTTSMLSVLQAIILSPRSSCLSKFKHISLHHILCAILFLSVLYMLISSQLLVSIIATPNLTTNDLTYVTQSCSILPLSYLVESINSTLLAIREYFLISLMFLSTWYIVALLCMHRKQTQHLQETRLSLKKSPEQSATQTILMLMTFFVLMTIYDNIVSCLRTMLLNDPTSYSIELFMIHIYATVSPFVFMSNEKHIVNFLRSMGKRMINLNLH.

At 1 to 32 the chain is on the extracellular side; it reads MSKILFFSPCSLFSHTMNKNSRLHTNSNIGNT. Residues 33–53 traverse the membrane as a helical segment; that stretch reads FFSEIGIGITGNSFLLLYHIL. Topologically, residues 54–65 are cytoplasmic; that stretch reads KFIRGHRPRLTD. Residues 66–86 form a helical membrane-spanning segment; that stretch reads LPIGLLSLIHLLMLLVAAFIA. Residues 87–109 are Extracellular-facing; sequence TDIFISRRGWDDIICKFLVYLYR. Cysteines 101 and 188 form a disulfide. Residues 110 to 130 form a helical membrane-spanning segment; that stretch reads VLRGLSLCTTSMLSVLQAIIL. Residues 131–147 lie on the Cytoplasmic side of the membrane; the sequence is SPRSSCLSKFKHISLHH. A helical membrane pass occupies residues 148–168; the sequence is ILCAILFLSVLYMLISSQLLV. Over 169–209 the chain is Extracellular; it reads SIIATPNLTTNDLTYVTQSCSILPLSYLVESINSTLLAIRE. N-linked (GlcNAc...) asparagine glycosylation is found at N175 and N201. The helical transmembrane segment at 210-230 threads the bilayer; that stretch reads YFLISLMFLSTWYIVALLCMH. Residues 231-255 are Cytoplasmic-facing; that stretch reads RKQTQHLQETRLSLKKSPEQSATQT. Residues 256–276 form a helical membrane-spanning segment; that stretch reads ILMLMTFFVLMTIYDNIVSCL. The Extracellular segment spans residues 277–285; that stretch reads RTMLLNDPT. A helical membrane pass occupies residues 286–306; it reads SYSIELFMIHIYATVSPFVFM. The Cytoplasmic segment spans residues 307–329; that stretch reads SNEKHIVNFLRSMGKRMINLNLH.

This sequence belongs to the G-protein coupled receptor 1 family.

The protein resides in the cell membrane. Putative pheromone receptor implicated in the regulation of social and reproductive behavior. The sequence is that of Vomeronasal type-1 receptor 43 (Vmn1r43) from Mus musculus (Mouse).